The primary structure comprises 640 residues: Epithelial sodium channel subunit beta (640 aa).

The Cytoplasmic segment spans residues 1-50 (MHVKKYLLKGLHRLQKGPGYTYKELLVWYCDNTNTHGPKRIICEGPKKKA). The helical transmembrane segment at 51 to 71 (MWFLLTLLFAALVCWQWGIFI) threads the bilayer. The Extracellular portion of the chain corresponds to 72 to 532 (RTYLSWEVSV…GGQFGFWMGG (461 aa)). Intrachain disulfides connect C98–C272, C184–C189, C196–C203, C249–C256, C361–C448, C386–C444, C390–C440, C399–C426, and C401–C415. Residue N260 is glycosylated (N-linked (GlcNAc...) asparagine). A helical membrane pass occupies residues 533–553 (SVLCLIEFGEIIIDFVWITII). The Cytoplasmic segment spans residues 554–640 (KLVALAKSLR…IESDSEGDAI (87 aa)). The tract at residues 590–640 (FQPDTAPRSPNTGPYPSEQALPIPGTPPPNYDSLRLQPLDVIESDSEGDAI) is disordered. Residues 616-620 (PPPNY) carry the PY motif; recruits WW domain-containing proteins and is thereby required for ubiquitination and inhibition of the channel by NEDD4 and NEDD4L motif. The span at 631–640 (IESDSEGDAI) shows a compositional bias: acidic residues. Residues S633 and S635 each carry the phosphoserine modification.

Belongs to the amiloride-sensitive sodium channel (TC 1.A.6) family. SCNN1B subfamily. In terms of assembly, component of the heterotrimeric epithelial sodium channel (ENaC) composed of an alpha/SCNN1A, a beta/SCNN1B and a gamma/SCNN1G subunit. An additional delta/SCNN1D subunit can replace the alpha/SCNN1A subunit to form an alternative channel with specific properties. Interacts with WWP1 (via WW domains). Interacts with WWP2 (via WW domains); inhibits the channel. Interacts with the full-length immature form of PCSK9 (pro-PCSK9); inhibits ENaC by promoting its proteasomal degradation. Interacts (N-glycosylated) with BPIFA1; the interaction is direct and inhibits the proteolytic processing of SCNN1A and SCNN1G and the activation of ENaC. In terms of processing, ubiquitinated. Can be ubiquitinated at multiple sites and undergo monoubiquitination and polyubiquitination. Ubiquitination by NEDD4 or NEDD4L inhibits the ENaC channel through endocytosis, intracellular retention and degradation of its individual subunits. However, some studies could not confirm the ubiquitination of this subunit of the ENaC. Post-translationally, phosphorylated on serine and threonine residues. Aldosterone and insulin increase the basal level of phosphorylation. N-glycosylated. N-glycosylation is required for interaction with BPIFA1. In terms of tissue distribution, detected in placenta, lung and kidney. Expressed in kidney (at protein level).

The protein localises to the apical cell membrane. The protein resides in the cytoplasmic vesicle membrane. The enzyme catalyses Na(+)(in) = Na(+)(out). Originally identified and characterized by its inhibition by the diuretic drug amiloride. Its function is as follows. This is one of the three pore-forming subunits of the heterotrimeric epithelial sodium channel (ENaC), a critical regulator of sodium balance and fluid homeostasis. ENaC operates in epithelial tissues, where it mediates the electrodiffusion of sodium ions from extracellular fluid through the apical membrane of cells, with water following osmotically. It plays a key role in maintaining sodium homeostasis through electrogenic sodium reabsorption in the kidneys. Additionally, ENaC is essential for airway surface liquid homeostasis, which is crucial for proper mucus clearance. The chain is Epithelial sodium channel subunit beta from Homo sapiens (Human).